We begin with the raw amino-acid sequence, 280 residues long: uncharacterized protein (280 aa).

This is an uncharacterized protein from Acanthamoeba polyphaga (Amoeba).